A 352-amino-acid chain; its full sequence is Protein RecA (352 aa).

ATP is bound at residue 67-74 (GPESSGKT). Positions 330-352 (STPKPEAESQEKAAAAQDDDSLV) are disordered.

Belongs to the RecA family.

The protein resides in the cytoplasm. Can catalyze the hydrolysis of ATP in the presence of single-stranded DNA, the ATP-dependent uptake of single-stranded DNA by duplex DNA, and the ATP-dependent hybridization of homologous single-stranded DNAs. It interacts with LexA causing its activation and leading to its autocatalytic cleavage. The polypeptide is Protein RecA (Chromohalobacter salexigens (strain ATCC BAA-138 / DSM 3043 / CIP 106854 / NCIMB 13768 / 1H11)).